The following is a 538-amino-acid chain: Cytochrome P450 734A4 (538 aa).

The helical transmembrane segment at 5-27 threads the bilayer; sequence VAVAAAVLLLLHVAARVADAVWW. Residue Cys-480 participates in heme binding.

Belongs to the cytochrome P450 family. Heme serves as cofactor. Expressed in roots, shoot apex, leaf sheaths, leaf blades, internodes and panicles.

It localises to the membrane. Cytochrome P450 involved in brassinosteroids (BRs) inactivation and regulation of BRs homeostasis. Is a multifunctional and multisubstrate enzyme that controls the endogenous bioactive BR content both by direct inactivation of castasterone (CS) and by decreasing the levels of BR precursors. Catalyzes the oxidation of carbon 22 hydroxylated BR intermediates to produce C26 oxidized metabolites. This is Cytochrome P450 734A4 (CYP734A4) from Oryza sativa subsp. japonica (Rice).